Here is a 761-residue protein sequence, read N- to C-terminus: Cytoplasmic export protein 1 (761 aa).

2 HEAT repeats span residues isoleucine 385–glutamate 423 and asparagine 498–leucine 534. 2 disordered regions span residues aspartate 660 to serine 692 and serine 714 to tryptophan 761. Polar residues-rich tracts occupy residues proline 680 to serine 692 and serine 714 to glycine 737. The segment covering glycine 747–tryptophan 761 has biased composition (acidic residues). Serine 754 bears the Phosphoserine mark.

In terms of assembly, associates with the nuclear pore complex (NPC). Interacts with GSP1, LOS1, MSN5, NUP116 and TEF2.

It localises to the cytoplasm. In terms of biological role, component of the nuclear tRNA export machinery that my collect tRNA from the nuclear tRNA export receptors of the aminoacylation-dependent export and may deliver aminoacylated tRNAs to the translation machinery pathway at the nuclear pore complex. This Saccharomyces cerevisiae (strain ATCC 204508 / S288c) (Baker's yeast) protein is Cytoplasmic export protein 1 (CEX1).